Consider the following 173-residue polypeptide: Lens fiber membrane intrinsic protein (173 aa).

Residues Met-1–Ser-3 lie on the Cytoplasmic side of the membrane. The helical transmembrane segment at Phe-4–Ala-24 threads the bilayer. Over Thr-25–Ala-66 the chain is Extracellular. 2 C-linked (Man) tryptophan glycosylation sites follow: Trp-43 and Trp-61. Asn-62 is a glycosylation site (N-linked (GlcNAc...) asparagine). Residues Phe-67–Ala-87 traverse the membrane as a helical segment. The Cytoplasmic segment spans residues Gln-88–Pro-98. Residues Phe-99–Tyr-119 form a helical membrane-spanning segment. At Thr-120–Tyr-140 the chain is on the extracellular side. The chain crosses the membrane as a helical span at residues Ile-141–Tyr-161. The Cytoplasmic portion of the chain corresponds to Arg-162–Arg-173. Position 171 is a phosphothreonine (Thr-171).

The protein belongs to the PMP-22/EMP/MP20 family. As to quaternary structure, seems to be associated with itself or another lens membrane component via disulfide bonds.

It localises to the membrane. Its function is as follows. Present in the thicker 16-17 nm junctions of mammalian lens fiber cells, where it may contribute to cell junctional organization. Acts as a receptor for calmodulin. May play an important role in both lens development and cataractogenesis. The sequence is that of Lens fiber membrane intrinsic protein (Lim2) from Mus musculus (Mouse).